The primary structure comprises 220 residues: Probable chemoreceptor glutamine deamidase CheD (220 aa).

This sequence belongs to the CheD family.

The catalysed reaction is L-glutaminyl-[protein] + H2O = L-glutamyl-[protein] + NH4(+). Its function is as follows. Probably deamidates glutamine residues to glutamate on methyl-accepting chemotaxis receptors (MCPs), playing an important role in chemotaxis. The protein is Probable chemoreceptor glutamine deamidase CheD of Cupriavidus metallidurans (strain ATCC 43123 / DSM 2839 / NBRC 102507 / CH34) (Ralstonia metallidurans).